The following is an 861-amino-acid chain: Bifunctional uridylyltransferase/uridylyl-removing enzyme (861 aa).

Residues 1–321 (MKNDNRIIKN…VYHQKQKIIR (321 aa)) form a uridylyltransferase region. Residues 322–678 (LDDEFQLSNR…IMPHHSQGGT (357 aa)) form a uridylyl-removing region. An HD domain is found at 440–562 (VDQHTLFVIR…LPHARYLDYL (123 aa)). ACT domains lie at 679–760 (EVFI…AVSR) and 788–861 (QLFL…KSKY).

It belongs to the GlnD family. Requires Mg(2+) as cofactor.

The catalysed reaction is [protein-PII]-L-tyrosine + UTP = [protein-PII]-uridylyl-L-tyrosine + diphosphate. It carries out the reaction [protein-PII]-uridylyl-L-tyrosine + H2O = [protein-PII]-L-tyrosine + UMP + H(+). With respect to regulation, uridylyltransferase (UTase) activity is inhibited by glutamine, while glutamine activates uridylyl-removing (UR) activity. In terms of biological role, modifies, by uridylylation and deuridylylation, the PII regulatory proteins (GlnB and homologs), in response to the nitrogen status of the cell that GlnD senses through the glutamine level. Under low glutamine levels, catalyzes the conversion of the PII proteins and UTP to PII-UMP and PPi, while under higher glutamine levels, GlnD hydrolyzes PII-UMP to PII and UMP (deuridylylation). Thus, controls uridylylation state and activity of the PII proteins, and plays an important role in the regulation of nitrogen assimilation and metabolism. This Legionella pneumophila (strain Paris) protein is Bifunctional uridylyltransferase/uridylyl-removing enzyme.